The sequence spans 617 residues: Dihydroxy-acid dehydratase (617 aa).

D81 serves as a coordination point for Mg(2+). [2Fe-2S] cluster is bound at residue C122. The Mg(2+) site is built by D123 and K124. K124 carries the N6-carboxylysine modification. A [2Fe-2S] cluster-binding site is contributed by C195. Residue E492 coordinates Mg(2+). The active-site Proton acceptor is S518.

Belongs to the IlvD/Edd family. In terms of assembly, homodimer. [2Fe-2S] cluster is required as a cofactor. Mg(2+) serves as cofactor.

The catalysed reaction is (2R)-2,3-dihydroxy-3-methylbutanoate = 3-methyl-2-oxobutanoate + H2O. It carries out the reaction (2R,3R)-2,3-dihydroxy-3-methylpentanoate = (S)-3-methyl-2-oxopentanoate + H2O. Its pathway is amino-acid biosynthesis; L-isoleucine biosynthesis; L-isoleucine from 2-oxobutanoate: step 3/4. It functions in the pathway amino-acid biosynthesis; L-valine biosynthesis; L-valine from pyruvate: step 3/4. In terms of biological role, functions in the biosynthesis of branched-chain amino acids. Catalyzes the dehydration of (2R,3R)-2,3-dihydroxy-3-methylpentanoate (2,3-dihydroxy-3-methylvalerate) into 2-oxo-3-methylpentanoate (2-oxo-3-methylvalerate) and of (2R)-2,3-dihydroxy-3-methylbutanoate (2,3-dihydroxyisovalerate) into 2-oxo-3-methylbutanoate (2-oxoisovalerate), the penultimate precursor to L-isoleucine and L-valine, respectively. This Buchnera aphidicola subsp. Cinara cedri (strain Cc) protein is Dihydroxy-acid dehydratase.